The sequence spans 716 residues: MTLTDSEMEYIEGILGRKMNELEEGMLDVMFSEHCSYKSSRPILGTFPTEGENIILGPGDDAGLVSVTDKYALAVGMESHNHPSAIEPYGGAGTGIGGILRDIISMGARPIALLDSLRFGSLDDEKSKYLFEHVVEGISDYGNRVGVPTVAGEVEFDDSFRTNPLVNVMCVGLVEKDKIVRGKAPYVGDVFLLMGGTTGRDGIHGVTFASEELTSDSETEDRPAVQVADPFTKKRVLEASLEILDEINVSGVKDLGGGGLTCCISELVDESNNGARVDLRNIPLRETGMTPYEIMLSESQERMVFVINPKDVKKAQEICDKHEIVSAVIGEVIDGNNMIIDDEGSSLADLPTILLADPPSLNRELKEIAEDTSKVEVDHPPVRQSLLELLSSPNIASKQWVYKQYDHEVQVRTVVKPGDDAAVLRIDDDTAIALTTDANTIHTKLSPFDGGAGCVAEAIRNVISMGATPYAVVDCLNFGNPETPEILWQFKRTIEGMSLVAENFNAPVISGNVSFYNETEGIKINPTPAVGVIGVENIENIRTMDFKNSGDKILLIGTTYDEVTGSEYHRTIHNIEKGMAPRIRIEDELANGKTILKLLDEDSSKNITAVHDVSHGGLAVALSEMVMKGNIGCEIDLDSIITSEDLEESDLIYSESHGRYIITVNADAVDEILNKIDVPVAIIGEVKGAVLKLGDNEFTIDELNDSYHGVIEKYMA.

The active site involves His-34. Tyr-37 lines the ATP pocket. Glu-78 contributes to the Mg(2+) binding site. Substrate contacts are provided by residues 79–82 and Arg-101; that span reads SHNH. His-80 serves as the catalytic Proton acceptor. Residue Asp-102 coordinates Mg(2+). Residue Gln-226 participates in substrate binding. Asp-254 is a binding site for Mg(2+). 298-300 provides a ligand contact to substrate; that stretch reads ESQ. 2 residues coordinate ATP: Asp-474 and Gly-511. Residue Asn-512 participates in Mg(2+) binding. Ser-514 serves as a coordination point for substrate.

This sequence belongs to the FGAMS family. As to quaternary structure, monomer. Part of the FGAM synthase complex composed of 1 PurL, 1 PurQ and 2 PurS subunits.

It is found in the cytoplasm. It carries out the reaction N(2)-formyl-N(1)-(5-phospho-beta-D-ribosyl)glycinamide + L-glutamine + ATP + H2O = 2-formamido-N(1)-(5-O-phospho-beta-D-ribosyl)acetamidine + L-glutamate + ADP + phosphate + H(+). The protein operates within purine metabolism; IMP biosynthesis via de novo pathway; 5-amino-1-(5-phospho-D-ribosyl)imidazole from N(2)-formyl-N(1)-(5-phospho-D-ribosyl)glycinamide: step 1/2. Its function is as follows. Part of the phosphoribosylformylglycinamidine synthase complex involved in the purines biosynthetic pathway. Catalyzes the ATP-dependent conversion of formylglycinamide ribonucleotide (FGAR) and glutamine to yield formylglycinamidine ribonucleotide (FGAM) and glutamate. The FGAM synthase complex is composed of three subunits. PurQ produces an ammonia molecule by converting glutamine to glutamate. PurL transfers the ammonia molecule to FGAR to form FGAM in an ATP-dependent manner. PurS interacts with PurQ and PurL and is thought to assist in the transfer of the ammonia molecule from PurQ to PurL. The chain is Phosphoribosylformylglycinamidine synthase subunit PurL from Methanobrevibacter smithii (strain ATCC 35061 / DSM 861 / OCM 144 / PS).